The primary structure comprises 148 residues: Leghemoglobin 29 (148 aa).

The 147-residue stretch at 2 to 148 folds into the Globin domain; it reads EFTLRQEALV…LAVAIMKEMS (147 aa). The residue at position 30 (Tyr30) is a Nitrated tyrosine. A heme b-binding site is contributed by Ser45. Phosphoserine is present on Ser45. Position 63 (His63) interacts with O2. 2 residues coordinate heme b: His95 and Lys98. Tyr136 carries the post-translational modification Nitrated tyrosine.

Belongs to the plant globin family. Monomer. In terms of processing, nitrated in effective nodules and particularly in hypoxic conditions; this mechanism may play a protective role in the symbiosis by buffering toxic peroxynitrite NO(2)(-). Nitration level decrease during nodule senescence. Post-translationally, phosphorylation at Ser-45 disrupts the molecular environment of its porphyrin ring oxygen binding pocket, thus leading to a reduced oxygen consumption and to the delivery of oxygen O(2) to symbiosomes. As to expression, accumulates in root nodules after inoculation by bacteria of the genus Rhizobium. Expressed in mycorrhizal roots in the presence of the mycorrhizal fungus Glomus fasciculatum.

It localises to the cytoplasm. Its subcellular location is the cytosol. The protein localises to the nucleus. In terms of biological role, leghemoglobin that reversibly binds oxygen O(2) through a pentacoordinated heme iron. In root nodules, facilitates the diffusion of oxygen to the bacteroids while preventing the bacterial nitrogenase from being inactivated by buffering dioxygen, nitric oxide and carbon monoxide, and promoting the formation of reactive oxygen species (ROS, e.g. H(2)O(2)). This role is essential for symbiotic nitrogen fixation (SNF). This is Leghemoglobin 29 from Vicia faba (Broad bean).